The sequence spans 362 residues: GDSL esterase/lipase At5g18430 (362 aa).

The first 19 residues, 1 to 19 (MTISTVIAFMSMFLVFVMS), serve as a signal peptide directing secretion. S35 functions as the Nucleophile in the catalytic mechanism. N117 carries an N-linked (GlcNAc...) asparagine glycan. Residues D327 and H330 contribute to the active site. N-linked (GlcNAc...) asparagine glycosylation is present at N355.

The protein belongs to the 'GDSL' lipolytic enzyme family.

It localises to the secreted. This Arabidopsis thaliana (Mouse-ear cress) protein is GDSL esterase/lipase At5g18430.